Here is a 399-residue protein sequence, read N- to C-terminus: Enoyl-[acyl-carrier-protein] reductase [NADH] (399 aa).

NAD(+) contacts are provided by residues 48 to 53 (GASTGY), 74 to 75 (FE), 111 to 112 (DA), and 139 to 140 (LA). Tyrosine 225 contacts substrate. The Proton donor role is filled by tyrosine 235. Residues lysine 244 and 274–276 (VVT) each bind NAD(+).

This sequence belongs to the TER reductase family. Monomer.

It carries out the reaction a 2,3-saturated acyl-[ACP] + NAD(+) = a (2E)-enoyl-[ACP] + NADH + H(+). It participates in lipid metabolism; fatty acid biosynthesis. Involved in the final reduction of the elongation cycle of fatty acid synthesis (FAS II). Catalyzes the reduction of a carbon-carbon double bond in an enoyl moiety that is covalently linked to an acyl carrier protein (ACP). The chain is Enoyl-[acyl-carrier-protein] reductase [NADH] from Yersinia pseudotuberculosis serotype O:1b (strain IP 31758).